The sequence spans 692 residues: Protein arginine N-methyltransferase 7 (692 aa).

2 consecutive SAM-dependent MTase PRMT-type domains span residues 14 to 359 (ENSW…YSLW) and 368 to 692 (AKTV…QEKR).

Belongs to the class I-like SAM-binding methyltransferase superfamily. Protein arginine N-methyltransferase family. PRMT7 subfamily.

Its function is as follows. Essential arginine methyltransferase that can both catalyze the formation of omega-N monomethylarginine (MMA) and symmetrical dimethylarginine (sDMA). Specifically mediates the symmetrical dimethylation of arginine residues in the small nuclear ribonucleoproteins SmD1 and SmD3. In Drosophila persimilis (Fruit fly), this protein is Protein arginine N-methyltransferase 7 (Art7).